The following is a 526-amino-acid chain: Estrogen receptor beta (526 aa).

The tract at residues 1-145 is modulating; that stretch reads MDIKNSPSNL…SPSSKRDAHF (145 aa). 2 positions are modified to phosphoserine; by MAPK: S84 and S102. 2 consecutive NR C4-type zinc fingers follow at residues 146–166 and 182–206; these read CAVC…CEGC and CPAT…LRKC. The nuclear receptor DNA-binding region spans 146 to 211; that stretch reads CAVCSDYASG…RLRKCYEVGM (66 aa). In terms of domain architecture, NR LBD spans 261-494; that stretch reads SPEQLVLTLL…DLLLEMLNAH (234 aa). Residues 502–526 form a disordered region; the sequence is LVTGSERSRMEESESKEGSQKPQAQ. Residues 507–520 show a composition bias toward basic and acidic residues; the sequence is ERSRMEESESKEGS.

It belongs to the nuclear hormone receptor family. NR3 subfamily. In terms of assembly, binds DNA as a homodimer. Can form a heterodimer with ESR1. Interacts with NCOA1, NCOA3, NCOA5 and NCOA6 coactivators, leading to a strong increase of transcription of target genes. Interacts with UBE1C and AKAP13. Interacts with DNTTIP2. Interacts with CCDC62 in the presence of estradiol/E2; this interaction seems to enhance the transcription of target genes. Interacts with DNAAF4. Interacts with PRMT2. Interacts with CCAR2 (via N-terminus) in a ligand-independent manner. Interacts with RBM39, in the presence of estradiol (E2). Interacts with STUB1/CHIP. Phosphorylation at Ser-84 and Ser-102 recruits NCOA1.

It localises to the nucleus. Functionally, nuclear hormone receptor. Binds estrogens with an affinity similar to that of ESR1/ER-alpha, and activates expression of reporter genes containing estrogen response elements (ERE) in an estrogen-dependent manner. In Sus scrofa (Pig), this protein is Estrogen receptor beta (ESR2).